A 518-amino-acid chain; its full sequence is Glucose-1-phosphate adenylyltransferase large subunit 2, cytosolic (518 aa).

It belongs to the bacterial/plant glucose-1-phosphate adenylyltransferase family. Heterotetramer composed of two small and two large subunits.

It localises to the cytoplasm. The protein resides in the cytosol. It carries out the reaction alpha-D-glucose 1-phosphate + ATP + H(+) = ADP-alpha-D-glucose + diphosphate. It participates in glycan biosynthesis; starch biosynthesis. Activated by 3'phosphoglycerate, inhibited by orthophosphate. Allosteric regulation. Inhibited by inorganic phosphate (Pi). Its function is as follows. Involved in synthesis of starch. Catalyzes the synthesis of ADP-glucose, a molecule that serves as an activated glycosyl donor for alpha-1,4-glucan synthesis. Essential for starch synthesis in seed endosperm. Is essential for both catalytic and allosteric regulatory properties of the cytosolic heterotetramer enzyme. This chain is Glucose-1-phosphate adenylyltransferase large subunit 2, cytosolic, found in Oryza sativa subsp. japonica (Rice).